We begin with the raw amino-acid sequence, 335 residues long: MIEKIWFDNHILGKLMWPLLWPLSCLFKYVANKKKLDYFTGKKTAYKSSVPVVVVGNITAGGNGKTPVVVWLVEQLQLQGMKVGVASRGYGGKAPHYPYLLSNTTTPDISGDEPVLIKQRTKAHVAVAPVRSEAVKMLEEQGVDIVITDDGLQHYALQRDVEFIVIDGKRRFGNQAFIPLGPLREGLDRLASVDFLICNGEQPKTNEIAMTLEPSKAVNLVTGEKKSVSNLGELVAFAGIGHPPRFFDTLASLNADVVHTQGFVDHKAFEPEEIKNLMQYGEQLIMTEKDAVKCQSFAESSWWYLPVDASFPEEKAQQILNKIIEVKEQYGLSSS.

59–66 (TAGGNGKT) is an ATP binding site.

This sequence belongs to the LpxK family.

It catalyses the reaction a lipid A disaccharide + ATP = a lipid IVA + ADP + H(+). It participates in glycolipid biosynthesis; lipid IV(A) biosynthesis; lipid IV(A) from (3R)-3-hydroxytetradecanoyl-[acyl-carrier-protein] and UDP-N-acetyl-alpha-D-glucosamine: step 6/6. Transfers the gamma-phosphate of ATP to the 4'-position of a tetraacyldisaccharide 1-phosphate intermediate (termed DS-1-P) to form tetraacyldisaccharide 1,4'-bis-phosphate (lipid IVA). The protein is Tetraacyldisaccharide 4'-kinase of Aliivibrio salmonicida (strain LFI1238) (Vibrio salmonicida (strain LFI1238)).